Consider the following 199-residue polypeptide: Recombination protein RecR (199 aa).

The C4-type zinc finger occupies 56 to 71 (CQQCNNYTEQTLCALC). A Toprim domain is found at 79–174 (TLLCVVESPA…NISQLAHGIP (96 aa)).

Belongs to the RecR family.

May play a role in DNA repair. It seems to be involved in an RecBC-independent recombinational process of DNA repair. It may act with RecF and RecO. The chain is Recombination protein RecR from Legionella pneumophila subsp. pneumophila (strain Philadelphia 1 / ATCC 33152 / DSM 7513).